The following is a 376-amino-acid chain: NAD-capped RNA hydrolase (376 aa).

4 residues coordinate Zn(2+): Cys182, Cys185, Cys200, and Cys211. Substrate-binding positions include Tyr222, 258–260, Glu274, Glu278, and Glu321; that span reads AGF. In terms of domain architecture, Nudix hydrolase spans 223–351; it reads PRTDPCVIMV…KDGPAPILFP (129 aa). Positions 258, 274, 278, and 321 each coordinate Mg(2+). The Nudix box signature appears at 259–280; that stretch reads GFLEPGESLEEAVVRETYEESG. The Microbody targeting signal signature appears at 374–376; it reads VKM.

The protein belongs to the Nudix hydrolase family. NudC subfamily. As to quaternary structure, homodimer. Requires Mg(2+) as cofactor. Zn(2+) serves as cofactor.

The catalysed reaction is a 5'-end NAD(+)-phospho-ribonucleoside in mRNA + H2O = a 5'-end phospho-adenosine-phospho-ribonucleoside in mRNA + beta-nicotinamide D-ribonucleotide + 2 H(+). It carries out the reaction NAD(+) + H2O = beta-nicotinamide D-ribonucleotide + AMP + 2 H(+). It catalyses the reaction NADH + H2O = reduced beta-nicotinamide D-ribonucleotide + AMP + 2 H(+). MRNA decapping enzyme that specifically removes the nicotinamide adenine dinucleotide (NAD) cap from a subset of mRNAs by hydrolyzing the diphosphate linkage to produce nicotinamide mononucleotide (NMN) and 5' monophosphate mRNA. The NAD-cap is present at the 5'-end of some RNAs; in contrast to the canonical N7 methylguanosine (m7G) cap, the NAD cap promotes mRNA decay. Mediates the hydrolysis of some nucleoside diphosphate derivatives. This chain is NAD-capped RNA hydrolase, found in Schizosaccharomyces pombe (strain 972 / ATCC 24843) (Fission yeast).